A 264-amino-acid polypeptide reads, in one-letter code: Thymidylate synthase (264 aa).

DUMP is bound at residue Arg21. Position 51 (His51) interacts with (6R)-5,10-methylene-5,6,7,8-tetrahydrofolate. 126–127 contributes to the dUMP binding site; the sequence is RR. The active-site Nucleophile is the Cys146. DUMP contacts are provided by residues 166–169, Asn177, and 207–209; these read RSCD and HLY. Asp169 serves as a coordination point for (6R)-5,10-methylene-5,6,7,8-tetrahydrofolate. Position 263 (Ala263) interacts with (6R)-5,10-methylene-5,6,7,8-tetrahydrofolate.

Belongs to the thymidylate synthase family. Bacterial-type ThyA subfamily. Homodimer.

It is found in the cytoplasm. It carries out the reaction dUMP + (6R)-5,10-methylene-5,6,7,8-tetrahydrofolate = 7,8-dihydrofolate + dTMP. It functions in the pathway pyrimidine metabolism; dTTP biosynthesis. Functionally, catalyzes the reductive methylation of 2'-deoxyuridine-5'-monophosphate (dUMP) to 2'-deoxythymidine-5'-monophosphate (dTMP) while utilizing 5,10-methylenetetrahydrofolate (mTHF) as the methyl donor and reductant in the reaction, yielding dihydrofolate (DHF) as a by-product. This enzymatic reaction provides an intracellular de novo source of dTMP, an essential precursor for DNA biosynthesis. The sequence is that of Thymidylate synthase from Enterobacter sp. (strain 638).